Here is a 414-residue protein sequence, read N- to C-terminus: Solute carrier family 25 member 46-B (414 aa).

Residues 1–13 (MQPRRPDRFDGLE) show a composition bias toward basic and acidic residues. Residues 1–89 (MQPRRPDRFD…AFGEENSGSS (89 aa)) are disordered. Residues 29–50 (YQSSFPARSLSSSGDLSQQWVT) are compositionally biased toward polar residues. The stretch at 92–183 (QVNRFAGFGI…GMLSEFTHLP (92 aa)) is one Solcar 1 repeat. 6 consecutive transmembrane segments (helical) span residues 99-119 (FGIG…CIVL), 159-179 (MGST…LSEF), 198-218 (HLLL…ASLI), 254-274 (LLPL…HYII), 310-330 (FPEL…LYPL), and 379-399 (LGFY…AIVL). A Solcar 2 repeat occupies 307–412 (EDYFPELLAN…KIIYSSVVQT (106 aa)).

Belongs to the mitochondrial carrier (TC 2.A.29) family.

The protein resides in the mitochondrion outer membrane. May play a role in mitochondrial dynamics by controlling mitochondrial membrane fission. This is Solute carrier family 25 member 46-B (slc25a46-b) from Xenopus laevis (African clawed frog).